A 276-amino-acid polypeptide reads, in one-letter code: Formamidopyrimidine-DNA glycosylase (276 aa).

P2 serves as the catalytic Schiff-base intermediate with DNA. E3 functions as the Proton donor in the catalytic mechanism. The Proton donor; for beta-elimination activity role is filled by K60. Residues H93 and R112 each coordinate DNA. Residues 240 to 274 (NVYGKKGEPCVTCGTILEKTVVGGRGTHYCPICQP) form an FPG-type zinc finger. Catalysis depends on R264, which acts as the Proton donor; for delta-elimination activity.

The protein belongs to the FPG family. Monomer. Requires Zn(2+) as cofactor.

It catalyses the reaction Hydrolysis of DNA containing ring-opened 7-methylguanine residues, releasing 2,6-diamino-4-hydroxy-5-(N-methyl)formamidopyrimidine.. The catalysed reaction is 2'-deoxyribonucleotide-(2'-deoxyribose 5'-phosphate)-2'-deoxyribonucleotide-DNA = a 3'-end 2'-deoxyribonucleotide-(2,3-dehydro-2,3-deoxyribose 5'-phosphate)-DNA + a 5'-end 5'-phospho-2'-deoxyribonucleoside-DNA + H(+). Involved in base excision repair of DNA damaged by oxidation or by mutagenic agents. Acts as a DNA glycosylase that recognizes and removes damaged bases. Has a preference for oxidized purines, such as 7,8-dihydro-8-oxoguanine (8-oxoG). Has AP (apurinic/apyrimidinic) lyase activity and introduces nicks in the DNA strand. Cleaves the DNA backbone by beta-delta elimination to generate a single-strand break at the site of the removed base with both 3'- and 5'-phosphates. The polypeptide is Formamidopyrimidine-DNA glycosylase (Bacillus cereus (strain ATCC 14579 / DSM 31 / CCUG 7414 / JCM 2152 / NBRC 15305 / NCIMB 9373 / NCTC 2599 / NRRL B-3711)).